A 547-amino-acid polypeptide reads, in one-letter code: Glucose-6-phosphate isomerase (547 aa).

Glutamate 353 functions as the Proton donor in the catalytic mechanism. Active-site residues include histidine 384 and lysine 512.

This sequence belongs to the GPI family.

Its subcellular location is the cytoplasm. The enzyme catalyses alpha-D-glucose 6-phosphate = beta-D-fructose 6-phosphate. It participates in carbohydrate biosynthesis; gluconeogenesis. Its pathway is carbohydrate degradation; glycolysis; D-glyceraldehyde 3-phosphate and glycerone phosphate from D-glucose: step 2/4. Its function is as follows. Catalyzes the reversible isomerization of glucose-6-phosphate to fructose-6-phosphate. The protein is Glucose-6-phosphate isomerase of Glaesserella parasuis serovar 5 (strain SH0165) (Haemophilus parasuis).